A 240-amino-acid polypeptide reads, in one-letter code: Citrate synthase-lysine N-methyltransferase CSKMT, mitochondrial (240 aa).

A mitochondrion-targeting transit peptide spans 1 to 21; that stretch reads MAALRRMLHLPRLTMGTCRPF.

Belongs to the methyltransferase superfamily.

The protein localises to the mitochondrion. The enzyme catalyses L-lysyl-[citrate synthase] + S-adenosyl-L-methionine = N(6)-methyl-L-lysyl-[citrate synthase] + S-adenosyl-L-homocysteine + H(+). The catalysed reaction is N(6)-methyl-L-lysyl-[citrate synthase] + S-adenosyl-L-methionine = N(6),N(6)-dimethyl-L-lysyl-[citrate synthase] + S-adenosyl-L-homocysteine + H(+). It catalyses the reaction N(6),N(6)-dimethyl-L-lysyl-[citrate synthase] + S-adenosyl-L-methionine = N(6),N(6),N(6)-trimethyl-L-lysyl-[citrate synthase] + S-adenosyl-L-homocysteine + H(+). With respect to regulation, citrate synthase-lysine methyltransferase activity is inhibited by S-adenosylhomocysteine (AdoHcy) and oxaloacetate (OAA). Its function is as follows. Protein-lysine methyltransferase that selectively trimethylates citrate synthase (CS) in mitochondria. Seems to conduct trimethylation in a highly distributive manner rather than in a processive manner, and thus introduces a single methyl group per binding event. This is Citrate synthase-lysine N-methyltransferase CSKMT, mitochondrial from Pongo abelii (Sumatran orangutan).